A 118-amino-acid chain; its full sequence is Hydrogenase maturation factor HypA (118 aa).

His2 provides a ligand contact to Ni(2+). Residues Cys74, Cys77, Cys91, and Cys94 each contribute to the Zn(2+) site.

The protein belongs to the HypA/HybF family.

Functionally, involved in the maturation of [NiFe] hydrogenases. Required for nickel insertion into the metal center of the hydrogenase. This chain is Hydrogenase maturation factor HypA, found in Helicobacter hepaticus (strain ATCC 51449 / 3B1).